The following is a 61-amino-acid chain: MPNILSLTCICFNSVLYPTSFFFAKLPEAYAIFNPIVDIMPVIPLFFFLLAFVWQAAVSFR.

The propeptide occupies 1-24; that stretch reads MPNILSLTCICFNSVLYPTSFFFA. A helical membrane pass occupies residues 32 to 52; that stretch reads IFNPIVDIMPVIPLFFFLLAF.

It belongs to the PsbK family. In terms of assembly, PSII is composed of 1 copy each of membrane proteins PsbA, PsbB, PsbC, PsbD, PsbE, PsbF, PsbH, PsbI, PsbJ, PsbK, PsbL, PsbM, PsbT, PsbX, PsbY, PsbZ, Psb30/Ycf12, at least 3 peripheral proteins of the oxygen-evolving complex and a large number of cofactors. It forms dimeric complexes. Detected in both etioplasts and green leaves; PSII is only assembled in green leaves.

It localises to the plastid. The protein localises to the chloroplast thylakoid membrane. Functionally, one of the components of the core complex of photosystem II (PSII). PSII is a light-driven water:plastoquinone oxidoreductase that uses light energy to abstract electrons from H(2)O, generating O(2) and a proton gradient subsequently used for ATP formation. It consists of a core antenna complex that captures photons, and an electron transfer chain that converts photonic excitation into a charge separation. The sequence is that of Photosystem II reaction center protein K from Hordeum vulgare (Barley).